Reading from the N-terminus, the 326-residue chain is Isopenicillin N synthase (326 aa).

Residues arginine 84, tyrosine 88, and tyrosine 186 each contribute to the isopenicillin N site. Residues arginine 84, tyrosine 88, tyrosine 186, histidine 209, and aspartate 211 each coordinate N-[(5S)-5-amino-5-carboxypentanoyl]-L-cysteinyl-D-valine. Residues 183 to 283 (LIRYPFLENY…RLSIPFFANL (101 aa)) enclose the Fe2OG dioxygenase domain. Fe(2+)-binding residues include histidine 209, aspartate 211, and histidine 265. Arginine 274 contributes to the 2-oxoglutarate binding site. Serine 276 contributes to the isopenicillin N binding site. Residue serine 276 coordinates N-[(5S)-5-amino-5-carboxypentanoyl]-L-cysteinyl-D-valine.

This sequence belongs to the iron/ascorbate-dependent oxidoreductase family. Requires Fe cation as cofactor. L-ascorbate serves as cofactor.

It catalyses the reaction N-[(5S)-5-amino-5-carboxypentanoyl]-L-cysteinyl-D-valine + O2 = isopenicillin N + 2 H2O. The protein operates within antibiotic biosynthesis; penicillin G biosynthesis; penicillin G from L-alpha-aminoadipate and L-cysteine and L-valine: step 2/3. Its function is as follows. Removes, in the presence of oxygen, 4 hydrogen atoms from delta-L-(alpha-aminoadipyl)-L-cysteinyl-D-valine (ACV) to form the azetidinone and thiazolidine rings of isopenicillin. This is Isopenicillin N synthase (pcbC) from Lysobacter lactamgenus.